Here is a 417-residue protein sequence, read N- to C-terminus: Cytoplasmic tRNA 2-thiolation protein 2 (417 aa).

Residues methionine 1–aspartate 11 are compositionally biased toward acidic residues. Positions methionine 1 to glutamine 24 are disordered. Residues glycine 13–threonine 22 show a composition bias toward basic and acidic residues.

Belongs to the CTU2/NCS2 family.

It is found in the cytoplasm. It functions in the pathway tRNA modification; 5-methoxycarbonylmethyl-2-thiouridine-tRNA biosynthesis. Its function is as follows. Plays a central role in 2-thiolation of mcm(5)S(2)U at tRNA wobble positions of tRNA(Lys), tRNA(Glu) and tRNA(Gln). May act by forming a heterodimer with NCS6/CTU1 that ligates sulfur from thiocarboxylated URM1 onto the uridine of tRNAs at wobble position. This is Cytoplasmic tRNA 2-thiolation protein 2 from Anopheles gambiae (African malaria mosquito).